Consider the following 37-residue polypeptide: Large ribosomal subunit protein bL36 (37 aa).

It belongs to the bacterial ribosomal protein bL36 family.

In Shewanella frigidimarina (strain NCIMB 400), this protein is Large ribosomal subunit protein bL36.